The chain runs to 293 residues: Release factor glutamine methyltransferase (293 aa).

Residues 130–134 (GTGSG), aspartate 153, tryptophan 182, and asparagine 199 contribute to the S-adenosyl-L-methionine site. 199 to 202 (NPPY) is a binding site for substrate.

Belongs to the protein N5-glutamine methyltransferase family. PrmC subfamily.

The catalysed reaction is L-glutaminyl-[peptide chain release factor] + S-adenosyl-L-methionine = N(5)-methyl-L-glutaminyl-[peptide chain release factor] + S-adenosyl-L-homocysteine + H(+). Methylates the class 1 translation termination release factors RF1/PrfA and RF2/PrfB on the glutamine residue of the universally conserved GGQ motif. This chain is Release factor glutamine methyltransferase, found in Prochlorococcus marinus (strain SARG / CCMP1375 / SS120).